Consider the following 320-residue polypeptide: Acetyl-coenzyme A carboxylase carboxyl transferase subunit alpha (320 aa).

The CoA carboxyltransferase C-terminal domain occupies 42–295 (IEEKAVQALN…GDAIAAAFAE (254 aa)).

The protein belongs to the AccA family. As to quaternary structure, acetyl-CoA carboxylase is a heterohexamer composed of biotin carboxyl carrier protein (AccB), biotin carboxylase (AccC) and two subunits each of ACCase subunit alpha (AccA) and ACCase subunit beta (AccD).

It is found in the cytoplasm. It carries out the reaction N(6)-carboxybiotinyl-L-lysyl-[protein] + acetyl-CoA = N(6)-biotinyl-L-lysyl-[protein] + malonyl-CoA. The protein operates within lipid metabolism; malonyl-CoA biosynthesis; malonyl-CoA from acetyl-CoA: step 1/1. Component of the acetyl coenzyme A carboxylase (ACC) complex. First, biotin carboxylase catalyzes the carboxylation of biotin on its carrier protein (BCCP) and then the CO(2) group is transferred by the carboxyltransferase to acetyl-CoA to form malonyl-CoA. This Rhodopseudomonas palustris (strain HaA2) protein is Acetyl-coenzyme A carboxylase carboxyl transferase subunit alpha.